The primary structure comprises 89 residues: Small ribosomal subunit protein uS15 (89 aa).

Residues 1-20 show a composition bias toward basic and acidic residues; it reads MSITQERKSALIAEHARGKT. Residues 1–24 are disordered; sequence MSITQERKSALIAEHARGKTDTGS.

The protein belongs to the universal ribosomal protein uS15 family. Part of the 30S ribosomal subunit. Forms a bridge to the 50S subunit in the 70S ribosome, contacting the 23S rRNA.

In terms of biological role, one of the primary rRNA binding proteins, it binds directly to 16S rRNA where it helps nucleate assembly of the platform of the 30S subunit by binding and bridging several RNA helices of the 16S rRNA. Its function is as follows. Forms an intersubunit bridge (bridge B4) with the 23S rRNA of the 50S subunit in the ribosome. The sequence is that of Small ribosomal subunit protein uS15 from Maricaulis maris (strain MCS10) (Caulobacter maris).